The sequence spans 137 residues: ATP synthase epsilon chain (137 aa).

The protein belongs to the ATPase epsilon chain family. In terms of assembly, F-type ATPases have 2 components, CF(1) - the catalytic core - and CF(0) - the membrane proton channel. CF(1) has five subunits: alpha(3), beta(3), gamma(1), delta(1), epsilon(1). CF(0) has three main subunits: a, b and c.

It is found in the cell inner membrane. Produces ATP from ADP in the presence of a proton gradient across the membrane. The protein is ATP synthase epsilon chain of Yersinia pestis bv. Antiqua (strain Antiqua).